The primary structure comprises 419 residues: MASTFSKLLTGRNASLLFATLGTSALTTGYLVNRQKVCAEARDQHKLFPPSADYPDLRKHNNCMAECLTPSIYAKLRNKVTANGYTLDQCIQTGVDNPGHPFIKTVGMVAGDEESYEVFADLFDPVIKLRHNGYDPRVMKHPTDLDASKITQGQFDERYVLSSRVRTGRSIRGLSLPPACSRAEAREVENVAITALEGLKGDLAGRYYRLSEMTEQDQQRLIDDHFLFDKPVSPLLTCAGMARDWPDARGIWHNYDNTFLIWINEEDHTRVISMEKGGNMKRVFERFCRGLKEVERLIQERGWEFMWNERLGYILTCPSNLGTGLRAGVHVRIPKLSKDPRFSKILENLRLQKRGTGGVDTRAVADVYDISNIDRIGRSEVELVQIVIDGVNYLVDCEKKLERGQDIKVPPPLPQFGKK.

The transit peptide at 1 to 39 (MASTFSKLLTGRNASLLFATLGTSALTTGYLVNRQKVCA) directs the protein to the mitochondrion. The cardiolipin-binding stretch occupies residues 40–64 (EARDQHKLFPPSADYPDLRKHNNCM). Residues 46–132 (KLFPPSADYP…FDPVIKLRHN (87 aa)) form the Phosphagen kinase N-terminal domain. The Phosphagen kinase C-terminal domain maps to 159–401 (YVLSSRVRTG…NYLVDCEKKL (243 aa)). ATP is bound by residues 162–166 (SSRVR) and histidine 225. Tyrosine 255 is subject to Phosphotyrosine. Residues arginine 270, arginine 326, 354 to 359 (RGTGGV), and aspartate 369 each bind ATP. A Phosphothreonine modification is found at threonine 356.

The protein belongs to the ATP:guanido phosphotransferase family. As to quaternary structure, exists as an octamer composed of four CKMT2 homodimers.

It is found in the mitochondrion inner membrane. It carries out the reaction creatine + ATP = N-phosphocreatine + ADP + H(+). Functionally, reversibly catalyzes the transfer of phosphate between ATP and various phosphogens (e.g. creatine phosphate). Creatine kinase isoenzymes play a central role in energy transduction in tissues with large, fluctuating energy demands, such as skeletal muscle, heart, brain and spermatozoa. The sequence is that of Creatine kinase S-type, mitochondrial (CKMT2) from Oryctolagus cuniculus (Rabbit).